We begin with the raw amino-acid sequence, 361 residues long: Probable cadicidin biosynthesis thioesterase (361 aa).

The 28-residue stretch at 2–29 folds into the 4Fe-4S ferredoxin-type domain; that stretch reads RVTVDSEQCVGAGQCVLNAPEVFDQDDD. The interval 36 to 110 is disordered; the sequence is RADPTSGTTR…RRDSPVTTAD (75 aa). Residues 46-61 are compositionally biased toward basic residues; it reads RSARRATCARRPRSSS. Composition is skewed to basic and acidic residues over residues 62–74 and 94–104; these read RRTE…DRHR and TDRRQNHRRDS. Residue S201 is part of the active site.

The protein belongs to the thioesterase family.

Its pathway is antibiotic biosynthesis; candicidin biosynthesis. Probable thioesterase involved in the biosynthesis of candicidin. Could release the macrolide ring from the polyketide synthase. In Streptomyces griseus, this protein is Probable cadicidin biosynthesis thioesterase.